A 94-amino-acid chain; its full sequence is Large ribosomal subunit protein bL27 (94 aa).

Residues 1 to 9 (MLKMNLQFF) constitute a propeptide that is removed on maturation.

It belongs to the bacterial ribosomal protein bL27 family. Post-translationally, the N-terminus is cleaved by ribosomal processing cysteine protease Prp.

The sequence is that of Large ribosomal subunit protein bL27 from Halalkalibacterium halodurans (strain ATCC BAA-125 / DSM 18197 / FERM 7344 / JCM 9153 / C-125) (Bacillus halodurans).